A 311-amino-acid chain; its full sequence is Lipoyl synthase (311 aa).

7 residues coordinate [4Fe-4S] cluster: C36, C41, C47, C66, C70, C73, and S280. Positions 51–269 (RDGPGTATFM…RVAESEFGFL (219 aa)) constitute a Radical SAM core domain.

This sequence belongs to the radical SAM superfamily. Lipoyl synthase family. [4Fe-4S] cluster is required as a cofactor.

It is found in the cytoplasm. The catalysed reaction is [[Fe-S] cluster scaffold protein carrying a second [4Fe-4S](2+) cluster] + N(6)-octanoyl-L-lysyl-[protein] + 2 oxidized [2Fe-2S]-[ferredoxin] + 2 S-adenosyl-L-methionine + 4 H(+) = [[Fe-S] cluster scaffold protein] + N(6)-[(R)-dihydrolipoyl]-L-lysyl-[protein] + 4 Fe(3+) + 2 hydrogen sulfide + 2 5'-deoxyadenosine + 2 L-methionine + 2 reduced [2Fe-2S]-[ferredoxin]. It participates in protein modification; protein lipoylation via endogenous pathway; protein N(6)-(lipoyl)lysine from octanoyl-[acyl-carrier-protein]: step 2/2. In terms of biological role, catalyzes the radical-mediated insertion of two sulfur atoms into the C-6 and C-8 positions of the octanoyl moiety bound to the lipoyl domains of lipoate-dependent enzymes, thereby converting the octanoylated domains into lipoylated derivatives. In Halobacterium salinarum (strain ATCC 29341 / DSM 671 / R1), this protein is Lipoyl synthase.